A 355-amino-acid polypeptide reads, in one-letter code: Peptide chain release factor 1 (355 aa).

An N5-methylglutamine modification is found at Gln-233.

This sequence belongs to the prokaryotic/mitochondrial release factor family. Post-translationally, methylated by PrmC. Methylation increases the termination efficiency of RF1.

The protein resides in the cytoplasm. Peptide chain release factor 1 directs the termination of translation in response to the peptide chain termination codons UAG and UAA. The chain is Peptide chain release factor 1 from Desulfitobacterium hafniense (strain DSM 10664 / DCB-2).